A 230-amino-acid polypeptide reads, in one-letter code: LexA repressor (230 aa).

Residues 28-48 (LREIGAHMGIRSTNGVNDHLR) constitute a DNA-binding region (H-T-H motif). Active-site for autocatalytic cleavage activity residues include S149 and K186.

It belongs to the peptidase S24 family. As to quaternary structure, homodimer.

It carries out the reaction Hydrolysis of Ala-|-Gly bond in repressor LexA.. In terms of biological role, represses a number of genes involved in the response to DNA damage (SOS response), including recA and lexA. In the presence of single-stranded DNA, RecA interacts with LexA causing an autocatalytic cleavage which disrupts the DNA-binding part of LexA, leading to derepression of the SOS regulon and eventually DNA repair. The chain is LexA repressor from Sorangium cellulosum (strain So ce56) (Polyangium cellulosum (strain So ce56)).